The following is a 319-amino-acid chain: Aspartate carbamoyltransferase catalytic subunit (319 aa).

Positions 65 and 66 each coordinate carbamoyl phosphate. An L-aspartate-binding site is contributed by Lys93. Carbamoyl phosphate contacts are provided by Arg115, His143, and Gln146. L-aspartate is bound by residues Arg176 and Arg230. Carbamoyl phosphate-binding residues include Gly271 and Pro272.

The protein belongs to the aspartate/ornithine carbamoyltransferase superfamily. ATCase family. In terms of assembly, heterododecamer (2C3:3R2) of six catalytic PyrB chains organized as two trimers (C3), and six regulatory PyrI chains organized as three dimers (R2).

The enzyme catalyses carbamoyl phosphate + L-aspartate = N-carbamoyl-L-aspartate + phosphate + H(+). It functions in the pathway pyrimidine metabolism; UMP biosynthesis via de novo pathway; (S)-dihydroorotate from bicarbonate: step 2/3. Its function is as follows. Catalyzes the condensation of carbamoyl phosphate and aspartate to form carbamoyl aspartate and inorganic phosphate, the committed step in the de novo pyrimidine nucleotide biosynthesis pathway. The chain is Aspartate carbamoyltransferase catalytic subunit from Chelativorans sp. (strain BNC1).